Here is a 146-residue protein sequence, read N- to C-terminus: MSINIDIKKITDLLNSSILFPDDVQELLREKYIVLERKSNGTPTVAHIYKTMARFDNKSIYRIAKFLFMNRPDVIKLLFLEDVEPLLPDKSINISINNTEYPQLEGPIGTKIALLELFNAFRTGISEPIPYYYLPLRKDINNIVTK.

Belongs to the orthopoxvirus OPG114 family. Part of a complex composed of the kinase OPG054, OPG092, OPG100, OPG114, OPG115, OPG142 and OPG157.

It localises to the virion. Its function is as follows. Late protein which is part of a large complex required for early virion morphogenesis. This complex participates in the formation of virosomes and the incorporation of virosomal contents into nascent immature virions. In Vaccinia virus (strain Copenhagen) (VACV), this protein is Core protein D2 (OPG114).